A 208-amino-acid chain; its full sequence is Receptor expression-enhancing protein 6 (208 aa).

Transmembrane regions (helical) follow at residues 49-69 (GAFL…GFVY), 93-113 (WVIY…LHWF), and 115-135 (FYYV…SWNG). Positions 187 to 208 (VGPAESEPRSLPSSAHTEPTVD) are disordered. Positions 197 to 208 (LPSSAHTEPTVD) are enriched in polar residues.

It belongs to the DP1 family.

It is found in the endoplasmic reticulum membrane. The protein resides in the cytoplasmic vesicle. The protein localises to the clathrin-coated vesicle membrane. Its function is as follows. Required correct function and survival of retinal photoreceptors. Required for retinal development. In rod photoreceptors, facilitates stability and/or trafficking of guanylate cyclases and is required to maintain endoplasmic reticulum and mitochondrial homeostasis. May play a role in clathrin-coated intracellular vesicle trafficking of proteins from the endoplasmic reticulum to the retinal rod plasma membrane. In Danio rerio (Zebrafish), this protein is Receptor expression-enhancing protein 6.